The primary structure comprises 287 residues: Co-chaperone protein DjlA (287 aa).

The Periplasmic portion of the chain corresponds to 1–6; sequence MQIFGK. The helical transmembrane segment at 7–30 threads the bilayer; it reads ILGAFFGFLFGGVFGALFGLFIGH. Residues 31 to 287 are Cytoplasmic-facing; it reads QFDKARRLSQ…DLIKKEKGFK (257 aa). Residues 192-213 are disordered; that stretch reads GGFGGQQHQSHHSSSHGGWQQA. Residues 221 to 287 form the J domain; that stretch reads DAYKILGIDA…DLIKKEKGFK (67 aa).

Homodimer.

The protein resides in the cell inner membrane. Regulatory DnaK co-chaperone. Direct interaction between DnaK and DjlA is needed for the induction of the wcaABCDE operon, involved in the synthesis of a colanic acid polysaccharide capsule, possibly through activation of the RcsB/RcsC phosphotransfer signaling pathway. The colanic acid capsule may help the bacterium survive conditions outside the host. This chain is Co-chaperone protein DjlA, found in Vibrio vulnificus (strain YJ016).